The following is a 37-amino-acid chain: Cytochrome b6-f complex subunit 5 (37 aa).

The chain crosses the membrane as a helical span at residues 5-25 (FLLGIILGLIPITLIGLFVTA).

This sequence belongs to the PetG family. As to quaternary structure, the 4 large subunits of the cytochrome b6-f complex are cytochrome b6, subunit IV (17 kDa polypeptide, PetD), cytochrome f and the Rieske protein, while the 4 small subunits are PetG, PetL, PetM and PetN. The complex functions as a dimer.

Its subcellular location is the plastid membrane. In terms of biological role, component of the cytochrome b6-f complex, which mediates electron transfer between photosystem II (PSII) and photosystem I (PSI), cyclic electron flow around PSI, and state transitions. PetG is required for either the stability or assembly of the cytochrome b6-f complex. This Cuscuta obtusiflora (Peruvian dodder) protein is Cytochrome b6-f complex subunit 5.